The following is an 80-amino-acid chain: Exodeoxyribonuclease 7 small subunit (80 aa).

It belongs to the XseB family. In terms of assembly, heterooligomer composed of large and small subunits.

It localises to the cytoplasm. It carries out the reaction Exonucleolytic cleavage in either 5'- to 3'- or 3'- to 5'-direction to yield nucleoside 5'-phosphates.. Bidirectionally degrades single-stranded DNA into large acid-insoluble oligonucleotides, which are then degraded further into small acid-soluble oligonucleotides. The protein is Exodeoxyribonuclease 7 small subunit of Pseudomonas putida (strain ATCC 700007 / DSM 6899 / JCM 31910 / BCRC 17059 / LMG 24140 / F1).